We begin with the raw amino-acid sequence, 137 residues long: Urease subunit beta (137 aa).

Residues 113-137 (NGHPNAGVKNDEGKQNANKESGDNR) form a disordered region.

Belongs to the urease beta subunit family. Heterotrimer of UreA (gamma), UreB (beta) and UreC (alpha) subunits. Three heterotrimers associate to form the active enzyme.

Its subcellular location is the cytoplasm. The catalysed reaction is urea + 2 H2O + H(+) = hydrogencarbonate + 2 NH4(+). It participates in nitrogen metabolism; urea degradation; CO(2) and NH(3) from urea (urease route): step 1/1. The sequence is that of Urease subunit beta from Staphylococcus carnosus (strain TM300).